A 102-amino-acid chain; its full sequence is Small ribosomal subunit protein uS10 (102 aa).

The protein belongs to the universal ribosomal protein uS10 family. In terms of assembly, part of the 30S ribosomal subunit.

Its function is as follows. Involved in the binding of tRNA to the ribosomes. The sequence is that of Small ribosomal subunit protein uS10 from Clostridium botulinum (strain ATCC 19397 / Type A).